A 284-amino-acid chain; its full sequence is Signal peptidase I (284 aa).

Residues 4-22 (NFPLLLVIAVAVCGALALV) traverse the membrane as a helical segment. Residues 23–58 (DLVLFAPRRRAAISSYEGQVNEPDPAVLEKLNKEPL) are Cytoplasmic-facing. The helical transmembrane segment at 59–77 (LVEYGKSFFPVLFIVLVLR) threads the bilayer. Residues 78–284 (SFLVEPFQIP…PNFSRVGVIH (207 aa)) lie on the Periplasmic side of the membrane. Catalysis depends on residues S90 and K145.

Belongs to the peptidase S26 family.

It is found in the cell inner membrane. It catalyses the reaction Cleavage of hydrophobic, N-terminal signal or leader sequences from secreted and periplasmic proteins.. This is Signal peptidase I (lepB) from Pseudomonas aeruginosa (strain ATCC 15692 / DSM 22644 / CIP 104116 / JCM 14847 / LMG 12228 / 1C / PRS 101 / PAO1).